A 228-amino-acid polypeptide reads, in one-letter code: Cell surface Cu-only superoxide dismutase 5 (228 aa).

An N-terminal signal peptide occupies residues 1 to 15 (MKYLSIFLLATFALA). Asparagine 53 is a glycosylation site (N-linked (GlcNAc...) asparagine). Cu cation is bound by residues histidine 75 and histidine 77. Asparagine 86 carries N-linked (GlcNAc...) asparagine glycosylation. Cysteine 87 and cysteine 162 are joined by a disulfide. Histidine 93 contributes to the Cu cation binding site. Asparagine 98 carries N-linked (GlcNAc...) asparagine glycosylation. Residue histidine 153 participates in Cu cation binding. N-linked (GlcNAc...) asparagine glycans are attached at residues asparagine 156, asparagine 164, asparagine 176, asparagine 181, and asparagine 192. A compositionally biased stretch (low complexity) spans 176-201 (NTTMSNSSSSSSQSAVNTSSSMASTA). Positions 176–204 (NTTMSNSSSSSSQSAVNTSSSMASTAPQG) are disordered. Asparagine 205 is lipidated: GPI-anchor amidated asparagine. Positions 206–228 (GAERAVVNGLLAAGVVGVIAALI) are cleaved as a propeptide — removed in mature form.

The protein belongs to the Cu-Zn superoxide dismutase family. As to quaternary structure, monomer. Cu cation is required as a cofactor. Post-translationally, the GPI-anchor is attached to the protein in the endoplasmic reticulum and serves to target the protein to the cell surface. There, the glucosamine-inositol phospholipid moiety is cleaved off and the GPI-modified mannoprotein is covalently attached via its lipidless GPI glycan remnant to the 1,6-beta-glucan of the outer cell wall layer.

Its subcellular location is the secreted. It localises to the cell wall. The protein resides in the membrane. It catalyses the reaction 2 superoxide + 2 H(+) = H2O2 + O2. Its activity is regulated as follows. Secreted in a disulfide-oxidized form and apo-pools of secreted SOD5 can readily capture extracellular copper for rapid induction of enzyme activity. In terms of biological role, superoxide dismutases serve to convert damaging superoxide radicals, a key form of ROS, to less damaging hydrogen peroxide that can be converted into water by catalase action. Degrades host-derived reactive oxygen species to escape innate immune surveillance. Involved in the occurrence of miconazole-tolerant persisters in biofilms. Persisters are cells that survive high doses of an antimicrobial agent. The unusual attributes of SOD5-like fungal proteins, including the absence of zinc and an open active site that readily captures extracellular copper, make these SODs well suited to meet challenges in zinc and copper availability at the host-pathogen interface. In Candida albicans (strain SC5314 / ATCC MYA-2876) (Yeast), this protein is Cell surface Cu-only superoxide dismutase 5 (SOD5).